We begin with the raw amino-acid sequence, 3387 residues long: Genome polyprotein (3387 aa).

Residues 1 to 100 (MNQRKKVVRP…LNILNGRKRS (100 aa)) lie on the Cytoplasmic side of the membrane. The tract at residues 36–71 (LFSGKGPLRMVLAFITFLRVLSIPPTAGILKRWGQL) is hydrophobic; homodimerization of capsid protein C. A propeptide spans 100 to 113 (STMTLLCLIPTVMA) (ER anchor for the capsid protein C, removed in mature form by serine protease NS3). Residues 101-117 (TMTLLCLIPTVMAFHLS) traverse the membrane as a helical segment. Residues 118 to 237 (TRDGEPLMIV…GAWKHAQRVE (120 aa)) lie on the Extracellular side of the membrane. N-linked (GlcNAc...) asparagine; by host glycosylation occurs at Asn182. The chain crosses the membrane as a helical span at residues 238–258 (SWILRNPGFALLAGFMAYMIG). Topologically, residues 259–265 (QTGIQRT) are cytoplasmic. Residues 266 to 279 (VFFVLMMLVAPSYG) traverse the membrane as a helical segment. Over 280-723 (MRCVGVGNRD…AVHQVFGSVY (444 aa)) the chain is Extracellular. 4 disulfide bridges follow: Cys282–Cys309, Cys339–Cys400, Cys353–Cys384, and Cys371–Cys395. The N-linked (GlcNAc...) asparagine; by host glycan is linked to Asn346. The fusion peptide stretch occupies residues 377–390 (DRGWGNGCGLFGKG). N-linked (GlcNAc...) asparagine; by host glycosylation occurs at Asn432. 2 disulfides stabilise this stretch: Cys464/Cys564 and Cys581/Cys612. The chain crosses the membrane as a helical span at residues 724-744 (TTMFGGVSWMVRILIGFLVLW). At 745–750 (IGTNSR) the chain is on the cytoplasmic side. Residues 751–771 (NTSMAMTCIAVGGITLFLGFT) traverse the membrane as a helical segment. The Extracellular portion of the chain corresponds to 772–1194 (VQADMGCVVS…MLGDTMSGRI (423 aa)). Cystine bridges form between Cys778-Cys789, Cys829-Cys917, Cys953-Cys997, Cys1054-Cys1103, Cys1065-Cys1087, and Cys1086-Cys1090. N-linked (GlcNAc...) asparagine; by host glycans are attached at residues Asn904 and Asn981. A helical transmembrane segment spans residues 1195–1218 (GGQVHLAIMAVFKMSPGYVLGVFL). Residues 1219-1224 (RKLTSR) are Lumenal-facing. The chain crosses the membrane as a helical span at residues 1225–1243 (ETALMVIGMAMTTVLSIPH). Residues 1244–1267 (DLMELIDGISLGLILLKIVTQFDN) are Cytoplasmic-facing. The helical transmembrane segment at 1268-1288 (TQVGTLALSLTFIRSTMPLVM) threads the bilayer. Ala1289 is a topological domain (lumenal). The helical transmembrane segment at 1290-1308 (WRTIMAVLFVVTLIPLCRT) threads the bilayer. Residues 1309-1316 (SCLQKQSH) lie on the Lumenal side of the membrane. The helical transmembrane segment at 1317–1337 (WVEITALILGAQALPVYLMTL) threads the bilayer. The Cytoplasmic segment spans residues 1338–1345 (MKGASRRS). The chain crosses the membrane as a helical span at residues 1346-1366 (WPLNEGIMAVGLVSLLGSALL). Residues 1367 to 1369 (KND) are Lumenal-facing. The helical transmembrane segment at 1370–1390 (VPLAGPMVAGGLLLAAYVMSG) threads the bilayer. At 1391 to 1437 (SSADLSLEKAANVQWDEMADITGSSPIIEVKQDEDGSFSIRDVEETN) the chain is on the cytoplasmic side. The interval 1397 to 1436 (LEKAANVQWDEMADITGSSPIIEVKQDEDGSFSIRDVEET) is interacts with and activates NS3 protease. Positions 1438-1458 (MITLLVKLALITVSGLYPLAI) form an intramembrane region, helical. Residues 1459–2143 (PVTMTLWYMW…QHALNELPES (685 aa)) are Cytoplasmic-facing. A Peptidase S7 domain is found at 1475–1652 (SGALWDVPSP…ERIGEPDYEV (178 aa)). Residues His1525, Asp1549, and Ser1609 each act as charge relay system; for serine protease NS3 activity in the active site. Positions 1654 to 1810 (EDIFRKKRLT…QSNSPIEDIE (157 aa)) constitute a Helicase ATP-binding domain. The important for RNA-binding stretch occupies residues 1658 to 1661 (RKKR). 1667–1674 (LHPGAGKT) provides a ligand contact to ATP. Positions 1758–1761 (DEAH) match the DEAH box motif. The Helicase C-terminal domain maps to 1820–1987 (TGFDWITDYQ…IIPTLFGPER (168 aa)). N6-acetyllysine; by host is present on Lys1862. Residues 2144–2164 (LETLMLVALLGAMTAGTFLFF) form a helical membrane-spanning segment. The Lumenal segment spans residues 2165–2169 (MQGKG). Positions 2170–2190 (IGKLSMGLITIAVASGLLWVA) form an intramembrane region, helical. A topological domain (lumenal) is located at residue Glu2191. A helical membrane pass occupies residues 2192 to 2212 (LQPQWIAASIILEFFLMVLLI). Over 2213–2225 (PEPEKQRTPQDNQ) the chain is Cytoplasmic. A helical transmembrane segment spans residues 2226–2246 (LIYVILTILTIIGLIAANEMG). The Lumenal segment spans residues 2247-2270 (LIEKTKTDFGFYQVKTETTILDVD). The segment at residues 2271–2291 (LRPASAWTLYAVATTILTPML) is an intramembrane region (helical). Over 2292–2301 (RHTIENTSAN) the chain is Lumenal. N-linked (GlcNAc...) asparagine; by host glycans are attached at residues Asn2297 and Asn2301. The segment at residues 2302 to 2322 (LSLAAIANQAAVLMGLGKGWP) is an intramembrane region (helical). Over 2323 to 2343 (LHRVDLGVPLLAMGCYSQVNP) the chain is Lumenal. Residues 2344–2364 (TTLTASLVMLLVHYAIIGPGL) form a helical membrane-spanning segment. Over 2365–2409 (QAKATREAQKRTAAGIMKNPTVDGITVIDLEPISYDPKFEKQLGQ) the chain is Cytoplasmic. A helical transmembrane segment spans residues 2410 to 2430 (VMLLVLCAGQLLLMRTTWAFC). Over 2431-2455 (EVLTLATGPILTLWEGNPGRFWNTT) the chain is Lumenal. Asn2453 is a glycosylation site (N-linked (GlcNAc...) asparagine; by host). A helical transmembrane segment spans residues 2456-2476 (IAVSTANIFRGSYLAGAGLAF). The Cytoplasmic portion of the chain corresponds to 2477–3387 (SLIKNAQTPR…SAPSESEGVL (911 aa)). Residues 2489 to 2751 (TGTTGETLGE…DVDLGAGTRS (263 aa)) form the mRNA cap 0-1 NS5-type MT domain. Ser2543 contacts S-adenosyl-L-methionine. Position 2543 is a phosphoserine (Ser2543). The active-site For 2'-O-MTase activity is the Lys2548. The SUMO-interacting motif motif lies at 2564–2567 (VVDL). S-adenosyl-L-methionine is bound by residues Gly2573, Trp2574, Thr2591, Lys2592, Asp2618, and Val2619. Asp2633 (for 2'-O-MTase activity) is an active-site residue. Ile2634 serves as a coordination point for S-adenosyl-L-methionine. Catalysis depends on for 2'-O-MTase activity residues Lys2668 and Glu2704. Tyr2706 contacts S-adenosyl-L-methionine. Zn(2+)-binding residues include Glu2925, His2929, Cys2934, and Cys2937. Positions 3016–3166 (LMYADDTAGW…PLDERFSTSL (151 aa)) constitute a RdRp catalytic domain. Zn(2+) contacts are provided by His3200, Cys3216, and Cys3335.

It in the N-terminal section; belongs to the class I-like SAM-binding methyltransferase superfamily. mRNA cap 0-1 NS5-type methyltransferase family. In terms of assembly, homodimer. Interacts (via N-terminus) with host EXOC1 (via C-terminus); this interaction results in EXOC1 degradation through the proteasome degradation pathway. As to quaternary structure, forms heterodimers with envelope protein E in the endoplasmic reticulum and Golgi. Homodimer; in the endoplasmic reticulum and Golgi. Interacts with protein prM. Interacts with non-structural protein 1. In terms of assembly, homodimer; Homohexamer when secreted. Interacts with envelope protein E. As to quaternary structure, interacts (via N-terminus) with serine protease NS3. Forms a heterodimer with serine protease NS3. May form homooligomers. In terms of assembly, forms a heterodimer with NS2B. Interacts with NS4B. Interacts with unphosphorylated RNA-directed RNA polymerase NS5; this interaction stimulates RNA-directed RNA polymerase NS5 guanylyltransferase activity. Interacts with host SHFL. As to quaternary structure, interacts with host MAVS; this interaction inhibits the synthesis of IFN-beta. Interacts with host SHFL. Interacts with host AUP1; the interaction occurs in the presence of Dengue virus NS4B and induces lipophagy which facilitates production of virus progeny particles. Interacts with serine protease NS3. In terms of assembly, homodimer. Interacts with host STAT2; this interaction inhibits the phosphorylation of the latter, and, when all viral proteins are present (polyprotein), targets STAT2 for degradation. Interacts with serine protease NS3. Interacts with host PAF1 complex; the interaction may prevent the recruitment of the PAF1 complex to interferon-responsive genes, and thus reduces the immune response. In terms of processing, specific enzymatic cleavages in vivo yield mature proteins. Cleavages in the lumen of endoplasmic reticulum are performed by host signal peptidase, whereas cleavages in the cytoplasmic side are performed by serine protease NS3. Signal cleavage at the 2K-4B site requires a prior NS3 protease-mediated cleavage at the 4A-2K site. Post-translationally, cleaved in post-Golgi vesicles by a host furin, releasing the mature small envelope protein M, and peptide pr. This cleavage is incomplete as up to 30% of viral particles still carry uncleaved prM. N-glycosylated. In terms of processing, N-glycosylated. The excreted form is glycosylated and this is required for efficient secretion of the protein from infected cells. Post-translationally, acetylated by host KAT5. Acetylation modulates NS3 RNA-binding and unwinding activities and plays an important positive role for viral replication. Sumoylation of RNA-directed RNA polymerase NS5 increases NS5 protein stability allowing proper viral RNA replication. In terms of processing, phosphorylated on serines residues. This phosphorylation may trigger NS5 nuclear localization.

The protein resides in the virion. The protein localises to the host nucleus. Its subcellular location is the host cytoplasm. It is found in the host perinuclear region. It localises to the secreted. The protein resides in the virion membrane. The protein localises to the host endoplasmic reticulum membrane. Its subcellular location is the host mitochondrion. It catalyses the reaction Selective hydrolysis of -Xaa-Xaa-|-Yaa- bonds in which each of the Xaa can be either Arg or Lys and Yaa can be either Ser or Ala.. The enzyme catalyses RNA(n) + a ribonucleoside 5'-triphosphate = RNA(n+1) + diphosphate. The catalysed reaction is a ribonucleoside 5'-triphosphate + H2O = a ribonucleoside 5'-diphosphate + phosphate + H(+). It carries out the reaction ATP + H2O = ADP + phosphate + H(+). It catalyses the reaction a 5'-end (5'-triphosphoguanosine)-ribonucleoside in mRNA + S-adenosyl-L-methionine = a 5'-end (N(7)-methyl 5'-triphosphoguanosine)-ribonucleoside in mRNA + S-adenosyl-L-homocysteine. The enzyme catalyses a 5'-end (N(7)-methyl 5'-triphosphoguanosine)-ribonucleoside in mRNA + S-adenosyl-L-methionine = a 5'-end (N(7)-methyl 5'-triphosphoguanosine)-(2'-O-methyl-ribonucleoside) in mRNA + S-adenosyl-L-homocysteine + H(+). Plays a role in virus budding by binding to the cell membrane and gathering the viral RNA into a nucleocapsid that forms the core of a mature virus particle. During virus entry, may induce genome penetration into the host cytoplasm after hemifusion induced by the surface proteins. Can migrate to the cell nucleus where it modulates host functions. Overcomes the anti-viral effects of host EXOC1 by sequestering and degrading the latter through the proteasome degradation pathway. Functionally, inhibits RNA silencing by interfering with host Dicer. Its function is as follows. Prevents premature fusion activity of envelope proteins in trans-Golgi by binding to envelope protein E at pH6.0. After virion release in extracellular space, gets dissociated from E dimers. In terms of biological role, acts as a chaperone for envelope protein E during intracellular virion assembly by masking and inactivating envelope protein E fusion peptide. prM is the only viral peptide matured by host furin in the trans-Golgi network probably to avoid catastrophic activation of the viral fusion activity in acidic Golgi compartment prior to virion release. prM-E cleavage is inefficient, and many virions are only partially matured. These uncleaved prM would play a role in immune evasion. May play a role in virus budding. Exerts cytotoxic effects by activating a mitochondrial apoptotic pathway through M ectodomain. May display a viroporin activity. Functionally, binds to host cell surface receptor and mediates fusion between viral and cellular membranes. Envelope protein is synthesized in the endoplasmic reticulum in the form of heterodimer with protein prM. They play a role in virion budding in the ER, and the newly formed immature particle is covered with 60 spikes composed of heterodimer between precursor prM and envelope protein E. The virion is transported to the Golgi apparatus where the low pH causes dissociation of PrM-E heterodimers and formation of E homodimers. prM-E cleavage is inefficient, and many virions are only partially matured. These uncleaved prM would play a role in immune evasion. Its function is as follows. Involved in immune evasion, pathogenesis and viral replication. Once cleaved off the polyprotein, is targeted to three destinations: the viral replication cycle, the plasma membrane and the extracellular compartment. Essential for viral replication. Required for formation of the replication complex and recruitment of other non-structural proteins to the ER-derived membrane structures. Excreted as a hexameric lipoparticle that plays a role against host immune response. Antagonizing the complement function. Binds to the host macrophages and dendritic cells. Inhibits signal transduction originating from Toll-like receptor 3 (TLR3). In terms of biological role, disrupts the host endothelial glycocalyx layer of host pulmonary microvascular endothelial cells, inducing degradation of sialic acid and shedding of heparan sulfate proteoglycans. NS1 induces expression of sialidases, heparanase, and activates cathepsin L, which activates heparanase via enzymatic cleavage. These effects are probably linked to the endothelial hyperpermeability observed in severe dengue disease. Component of the viral RNA replication complex that functions in virion assembly and antagonizes the host immune response. Functionally, required cofactor for the serine protease function of NS3. May have membrane-destabilizing activity and form viroporins. Its function is as follows. Displays three enzymatic activities: serine protease, NTPase and RNA helicase. NS3 serine protease, in association with NS2B, performs its autocleavage and cleaves the polyprotein at dibasic sites in the cytoplasm: C-prM, NS2A-NS2B, NS2B-NS3, NS3-NS4A, NS4A-2K and NS4B-NS5. NS3 RNA helicase binds RNA and unwinds dsRNA in the 3' to 5' direction. In terms of biological role, regulates the ATPase activity of the NS3 helicase activity. NS4A allows NS3 helicase to conserve energy during unwinding. Plays a role in the inhibition of the host innate immune response. Interacts with host MAVS and thereby prevents the interaction between RIGI and MAVS. In turn, IFN-beta production is impaired. Interacts with host AUP1 which mediates induction of lipophagy in host cells and facilitates production of virus progeny particles. Functions as a signal peptide for NS4B and is required for the interferon antagonism activity of the latter. Functionally, induces the formation of ER-derived membrane vesicles where the viral replication takes place. Inhibits interferon (IFN)-induced host STAT1 phosphorylation and nuclear translocation, thereby preventing the establishment of cellular antiviral state by blocking the IFN-alpha/beta pathway. Its function is as follows. Replicates the viral (+) and (-) RNA genome, and performs the capping of genomes in the cytoplasm. NS5 methylates viral RNA cap at guanine N-7 and ribose 2'-O positions. Besides its role in RNA genome replication, also prevents the establishment of cellular antiviral state by blocking the interferon-alpha/beta (IFN-alpha/beta) signaling pathway. Inhibits host TYK2 and STAT2 phosphorylation, thereby preventing activation of JAK-STAT signaling pathway. May reduce immune responses by preventing the recruitment of the host PAF1 complex to interferon-responsive genes. The protein is Genome polyprotein of Dengue virus type 4 (strain Singapore/8976/1995) (DENV-4).